A 309-amino-acid polypeptide reads, in one-letter code: MKKTLKQEKIAVLLGGTSAEREVSLDSGQAVLNALLSAGFDAHPIDPKTFPVATLKEQGFDRVFNILHGRGGEDGTMQGLLEQIGIPYTGCGVMTSALTMDKMRTKMLWKAFGLPVAEMEIVTKANVGELNPSAVVEKLGLPVMVKPSLEGSSVGLTKVKRVEDLKSAVDFALKYDDTVLIEEWLSGAEFTVPVLDNEVLPSIRIVPEGEFYDYEAKYISDNTQYFCPSGLSAEREDELKQLVKQAYDVVGCRGWSRIDVMLDGNDAFRLVEVNTNPGMTSHSLFPKSAATVGYSFEQLVVKILELSAE.

The ATP-grasp domain occupies 106-305 (KMLWKAFGLP…FEQLVVKILE (200 aa)). 136-191 (VEKLGLPVMVKPSLEGSSVGLTKVKRVEDLKSAVDFALKYDDTVLIEEWLSGAEFT) is a binding site for ATP. 3 residues coordinate Mg(2+): D259, E272, and N274.

Belongs to the D-alanine--D-alanine ligase family. The cofactor is Mg(2+). Mn(2+) is required as a cofactor.

Its subcellular location is the cytoplasm. The enzyme catalyses 2 D-alanine + ATP = D-alanyl-D-alanine + ADP + phosphate + H(+). It participates in cell wall biogenesis; peptidoglycan biosynthesis. Functionally, cell wall formation. This is D-alanine--D-alanine ligase from Pasteurella multocida (strain Pm70).